The sequence spans 86 residues: U22-theraphotoxin-Cg1a (86 aa).

Residues 1-20 (MKVSVVLAITVLALLSVAYA) form the signal peptide. The propeptide occupies 21–51 (SEFEEKELVKEVVRTIFLGKEDAALREETDR). Cystine bridges form between Cys-53-Cys-67, Cys-60-Cys-72, and Cys-66-Cys-79. Phe-85 carries the post-translational modification Phenylalanine amide.

This sequence belongs to the neurotoxin 10 (Hwtx-1) family. 42 (Jztx-44) subfamily. As to expression, expressed by the venom gland.

Its subcellular location is the secreted. In terms of biological role, probable ion channel inhibitor. The sequence is that of U22-theraphotoxin-Cg1a from Chilobrachys guangxiensis (Chinese earth tiger tarantula).